Reading from the N-terminus, the 619-residue chain is Schlafen family member 12-like (619 aa).

The chain crosses the membrane as a helical span at residues 598 to 618 (IFLFVCLFRFCLFVCLFVFFL).

This sequence belongs to the Schlafen family.

The protein resides in the membrane. The protein is Schlafen family member 12-like (SLFN12L) of Pongo abelii (Sumatran orangutan).